We begin with the raw amino-acid sequence, 353 residues long: Guanine nucleotide-binding protein alpha-3 subunit (353 aa).

Residue Gly-2 is the site of N-myristoyl glycine attachment. Residue Cys-4 is the site of S-palmitoyl cysteine attachment. Residues Lys-32–Leu-353 enclose the G-alpha domain. Residues Lys-35–Thr-48 form a G1 motif region. Residues Gly-40–Ser-47, Leu-176–Thr-182, Asp-201–Gln-205, Asn-270–Asp-273, and Ala-326 contribute to the GTP site. Positions 47 and 182 each coordinate Mg(2+). Residues Asp-174–Thr-182 are G2 motif. Residues Phe-197–Arg-206 are G3 motif. The tract at residues Ile-266 to Asp-273 is G4 motif. The G5 motif stretch occupies residues Thr-324–Thr-329.

It belongs to the G-alpha family. G(q) subfamily. G proteins are composed of 3 units; alpha, beta and gamma. The alpha chain contains the guanine nucleotide binding site.

Its function is as follows. Guanine nucleotide-binding proteins (G proteins) are involved as modulators or transducers in various transmembrane signaling systems. Promotes transcription of 3',5'-cyclic phosphodiesterases pde-1 and pde-5, leading to reduced cGMP levels in sensory neurons. This causes suppression of insulin production and signaling which leads to increased daf-16 activity and contributes to increased adult lifespan and resistance to oxidative stress. In addition, by reducing cGMP levels, inhibits TGF-beta signaling pathways. Involved in behavioral response to P.aeruginosa by controlling the expression of daf-7, a member of the TGF-beta family, in ASJ sensory neurons. Plays a role in the avoidance response to the noxious chemical quinine in ASH sensory neurons. The chain is Guanine nucleotide-binding protein alpha-3 subunit from Caenorhabditis elegans.